The following is a 360-amino-acid chain: UDP-N-acetylglucosamine--N-acetylmuramyl-(pentapeptide) pyrophosphoryl-undecaprenol N-acetylglucosamine transferase (360 aa).

UDP-N-acetyl-alpha-D-glucosamine contacts are provided by S198 and Q289.

The protein belongs to the glycosyltransferase 28 family. MurG subfamily.

Its subcellular location is the cell membrane. The catalysed reaction is Mur2Ac(oyl-L-Ala-gamma-D-Glu-L-Lys-D-Ala-D-Ala)-di-trans,octa-cis-undecaprenyl diphosphate + UDP-N-acetyl-alpha-D-glucosamine = beta-D-GlcNAc-(1-&gt;4)-Mur2Ac(oyl-L-Ala-gamma-D-Glu-L-Lys-D-Ala-D-Ala)-di-trans,octa-cis-undecaprenyl diphosphate + UDP + H(+). Its pathway is cell wall biogenesis; peptidoglycan biosynthesis. In terms of biological role, cell wall formation. Catalyzes the transfer of a GlcNAc subunit on undecaprenyl-pyrophosphoryl-MurNAc-pentapeptide (lipid intermediate I) to form undecaprenyl-pyrophosphoryl-MurNAc-(pentapeptide)GlcNAc (lipid intermediate II). This chain is UDP-N-acetylglucosamine--N-acetylmuramyl-(pentapeptide) pyrophosphoryl-undecaprenol N-acetylglucosamine transferase, found in Streptococcus pyogenes serotype M12 (strain MGAS2096).